A 236-amino-acid polypeptide reads, in one-letter code: 1-(5-phosphoribosyl)-5-[(5-phosphoribosylamino)methylideneamino] imidazole-4-carboxamide isomerase (236 aa).

Asp8 functions as the Proton acceptor in the catalytic mechanism. Asp129 serves as the catalytic Proton donor.

This sequence belongs to the HisA/HisF family.

It localises to the cytoplasm. It catalyses the reaction 1-(5-phospho-beta-D-ribosyl)-5-[(5-phospho-beta-D-ribosylamino)methylideneamino]imidazole-4-carboxamide = 5-[(5-phospho-1-deoxy-D-ribulos-1-ylimino)methylamino]-1-(5-phospho-beta-D-ribosyl)imidazole-4-carboxamide. It participates in amino-acid biosynthesis; L-histidine biosynthesis; L-histidine from 5-phospho-alpha-D-ribose 1-diphosphate: step 4/9. This Methanosphaerula palustris (strain ATCC BAA-1556 / DSM 19958 / E1-9c) protein is 1-(5-phosphoribosyl)-5-[(5-phosphoribosylamino)methylideneamino] imidazole-4-carboxamide isomerase.